A 664-amino-acid polypeptide reads, in one-letter code: Glycine--tRNA ligase beta subunit (664 aa).

The protein belongs to the class-II aminoacyl-tRNA synthetase family. As to quaternary structure, tetramer of two alpha and two beta subunits.

It localises to the cytoplasm. It catalyses the reaction tRNA(Gly) + glycine + ATP = glycyl-tRNA(Gly) + AMP + diphosphate. The chain is Glycine--tRNA ligase beta subunit (glyS) from Aquifex aeolicus (strain VF5).